The sequence spans 92 residues: Small ribosomal subunit protein uS19c (92 aa).

It belongs to the universal ribosomal protein uS19 family.

Its subcellular location is the plastid. The protein localises to the chloroplast. Functionally, protein S19 forms a complex with S13 that binds strongly to the 16S ribosomal RNA. The chain is Small ribosomal subunit protein uS19c (rps19) from Pisum sativum (Garden pea).